Here is a 271-residue protein sequence, read N- to C-terminus: Elongation factor Ts (271 aa).

The involved in Mg(2+) ion dislocation from EF-Tu stretch occupies residues 76 to 79; it reads TDFV.

It belongs to the EF-Ts family.

Its subcellular location is the cytoplasm. Its function is as follows. Associates with the EF-Tu.GDP complex and induces the exchange of GDP to GTP. It remains bound to the aminoacyl-tRNA.EF-Tu.GTP complex up to the GTP hydrolysis stage on the ribosome. The polypeptide is Elongation factor Ts (Mycolicibacterium gilvum (strain PYR-GCK) (Mycobacterium gilvum (strain PYR-GCK))).